The primary structure comprises 470 residues: Sulfate adenylyltransferase subunit 1 (470 aa).

In terms of domain architecture, tr-type G spans 22-238 (KELLRFITCG…ETIKIDYAYT (217 aa)). The tract at residues 31 to 38 (GSVDDGKS) is G1. 31-38 (GSVDDGKS) lines the GTP pocket. The segment at 89-93 (GITID) is G2. Residues 110 to 113 (DTPG) are G3. Residues 110-114 (DTPGH) and 165-168 (NKMD) each bind GTP. Positions 165 to 168 (NKMD) are G4. The G5 stretch occupies residues 202–204 (SAL).

This sequence belongs to the TRAFAC class translation factor GTPase superfamily. Classic translation factor GTPase family. CysN/NodQ subfamily. As to quaternary structure, heterodimer composed of CysD, the smaller subunit, and CysN.

The enzyme catalyses sulfate + ATP + H(+) = adenosine 5'-phosphosulfate + diphosphate. It functions in the pathway sulfur metabolism; hydrogen sulfide biosynthesis; sulfite from sulfate: step 1/3. With CysD forms the ATP sulfurylase (ATPS) that catalyzes the adenylation of sulfate producing adenosine 5'-phosphosulfate (APS) and diphosphate, the first enzymatic step in sulfur assimilation pathway. APS synthesis involves the formation of a high-energy phosphoric-sulfuric acid anhydride bond driven by GTP hydrolysis by CysN coupled to ATP hydrolysis by CysD. The chain is Sulfate adenylyltransferase subunit 1 from Francisella tularensis subsp. tularensis (strain WY96-3418).